Here is a 163-residue protein sequence, read N- to C-terminus: Outer membrane protein assembly factor BamE (163 aa).

A signal peptide spans 1 to 22 (MINKKQSLTLLSAIALSVSLSA). Cys23 carries the N-palmitoyl cysteine lipid modification. Cys23 is lipidated: S-diacylglycerol cysteine. The interval 122–163 (EQSKLPMVNTTESAPQVPAQRPDEKPLVKENQTEAQVQKPIK) is disordered. A compositionally biased stretch (basic and acidic residues) spans 142–153 (RPDEKPLVKENQ).

This sequence belongs to the BamE family. As to quaternary structure, part of the Bam complex.

Its subcellular location is the cell outer membrane. In terms of biological role, part of the outer membrane protein assembly complex, which is involved in assembly and insertion of beta-barrel proteins into the outer membrane. The chain is Outer membrane protein assembly factor BamE from Shewanella oneidensis (strain ATCC 700550 / JCM 31522 / CIP 106686 / LMG 19005 / NCIMB 14063 / MR-1).